We begin with the raw amino-acid sequence, 159 residues long: Ribosomal RNA large subunit methyltransferase H (159 aa).

S-adenosyl-L-methionine-binding positions include Leu76, Gly108, and 127–132 (FSHMTF).

This sequence belongs to the RNA methyltransferase RlmH family. Homodimer.

The protein resides in the cytoplasm. It carries out the reaction pseudouridine(1915) in 23S rRNA + S-adenosyl-L-methionine = N(3)-methylpseudouridine(1915) in 23S rRNA + S-adenosyl-L-homocysteine + H(+). Its function is as follows. Specifically methylates the pseudouridine at position 1915 (m3Psi1915) in 23S rRNA. This is Ribosomal RNA large subunit methyltransferase H from Halothermothrix orenii (strain H 168 / OCM 544 / DSM 9562).